The primary structure comprises 333 residues: MSNHTQPKIAIIGYGSQGRAHALNLRDSGFDVTVGLRPGGPTEAKAQADGFTVVAPSEAVKSADLVAILTPDMVQKKLYEEVIAPNMKQGACLLFAHGLNVHFDMITPRADLDVVLVAPKGPGALVRREYEIGRGVPCIYAVYQDTSGKAEQFALTYAGGLGGARANIIKTTFKEETETDLFGEQAVLCGGASSLVQAGFEVLVEAGYQPEIAYYEVLHELKLIVDLFYEGGITRMLEFVSETAQYGDYVSGPRVIDAGTKARMKDVLTDIQNGTFTKNWVAEYDAGLPNYNKFKQADLEHPIEEVGKKLRAKMVWLNGQQQAAAAPANQQAA.

In terms of domain architecture, KARI N-terminal Rossmann spans 1–171 (MSNHTQPKIA…GGARANIIKT (171 aa)). Residues 14-17 (YGSQ), Arg37, Thr42, and 72-75 (DMVQ) contribute to the NADP(+) site. His97 is a catalytic residue. Gly123 contributes to the NADP(+) binding site. Residues 172-317 (TFKEETETDL…KKLRAKMVWL (146 aa)) form the KARI C-terminal knotted domain. Asp180, Glu184, Glu216, and Glu220 together coordinate Mg(2+). Position 241 (Ser241) interacts with substrate.

This sequence belongs to the ketol-acid reductoisomerase family. Mg(2+) serves as cofactor.

The catalysed reaction is (2R)-2,3-dihydroxy-3-methylbutanoate + NADP(+) = (2S)-2-acetolactate + NADPH + H(+). It carries out the reaction (2R,3R)-2,3-dihydroxy-3-methylpentanoate + NADP(+) = (S)-2-ethyl-2-hydroxy-3-oxobutanoate + NADPH + H(+). The protein operates within amino-acid biosynthesis; L-isoleucine biosynthesis; L-isoleucine from 2-oxobutanoate: step 2/4. Its pathway is amino-acid biosynthesis; L-valine biosynthesis; L-valine from pyruvate: step 2/4. Involved in the biosynthesis of branched-chain amino acids (BCAA). Catalyzes an alkyl-migration followed by a ketol-acid reduction of (S)-2-acetolactate (S2AL) to yield (R)-2,3-dihydroxy-isovalerate. In the isomerase reaction, S2AL is rearranged via a Mg-dependent methyl migration to produce 3-hydroxy-3-methyl-2-ketobutyrate (HMKB). In the reductase reaction, this 2-ketoacid undergoes a metal-dependent reduction by NADPH to yield (R)-2,3-dihydroxy-isovalerate. The chain is Ketol-acid reductoisomerase (NADP(+)) from Xanthomonas axonopodis pv. citri (strain 306).